The following is a 335-amino-acid chain: G-protein coupled receptor 157 (335 aa).

Residues 1–15 (MQPSPPPTELVPSER) lie on the Extracellular side of the membrane. Residues 16–36 (AVVLLSCALSALGSGLLVATH) traverse the membrane as a helical segment. Topologically, residues 37-48 (ALWPDLRSRARR) are cytoplasmic. The helical transmembrane segment at 49-69 (LLLFLSLADLLSAASYFYGVL) threads the bilayer. Residues 70–87 (QNFAGPSWDCVLQGALST) lie on the Extracellular side of the membrane. A helical transmembrane segment spans residues 88–108 (FANTSSFFWTVAIALYLYLSI). The Cytoplasmic segment spans residues 109–119 (VRAARGPRTDR). Residues 120 to 140 (LLWAFHVVSWGVPLVITVAAV) traverse the membrane as a helical segment. Residues 141–166 (ALKKIGYDASDVSVGWCWIDLEAKDH) lie on the Extracellular side of the membrane. Residues 167 to 187 (VLWMLLTGKLWEMLAYVLLPL) form a helical membrane-spanning segment. The Cytoplasmic segment spans residues 188-226 (LYLLVRKHINRAHTALSEYRPILSQEHRLLRHSSMADKK). Residues 227-247 (LVLIPLIFIGLRVWSTVRFVL) traverse the membrane as a helical segment. Residues 248–258 (TLCGSPAVQTP) lie on the Extracellular side of the membrane. The helical transmembrane segment at 259–279 (VLVVLHGIGNTFQGGANCIMF) threads the bilayer. Topologically, residues 280-335 (VLCTRAVRTRLFSLCCCCCSSQPPTKSPAGTPKAPAPSKPGESQESQGTPGELPST) are cytoplasmic. The tract at residues 300-335 (SQPPTKSPAGTPKAPAPSKPGESQESQGTPGELPST) is disordered. The segment covering 320-335 (GESQESQGTPGELPST) has biased composition (polar residues).

The protein belongs to the G-protein coupled receptor 2 family.

The protein resides in the cell projection. Its subcellular location is the cilium membrane. Functionally, orphan receptor that promotes neuronal differentiation of radial glial progenitors (RGPs). The activity of this receptor is mediated by a G(q)-protein that activates a phosphatidylinositol-calcium second messenger. In Homo sapiens (Human), this protein is G-protein coupled receptor 157 (GPR157).